The chain runs to 717 residues: Probable E3 ubiquitin-protein ligase WAVH2 (717 aa).

Polar residues-rich tracts occupy residues 13 to 28 and 85 to 94; these read VSSN…SLHT and RTTSNATPRT. A disordered region spans residues 13–120; it reads VSSNQDKPQQ…SSSSSSSQGG (108 aa). The segment covering 95 to 117 has biased composition (low complexity); that stretch reads SNSSSPKFFSNPSSPKSSSSSSS. Residues 140–184 form an RING-type; atypical zinc finger; sequence CAICLQRVNSNQSNSTAAIFTAECSHSFHLSCVNGLEDKRCPFCS. A VWFA domain is found at 326–456; the sequence is DLVTVLDLSN…LNATRIPFVV (131 aa).

As to expression, expressed in root tips, cotyledons, leaf primordia and hypocotyls.

It catalyses the reaction S-ubiquitinyl-[E2 ubiquitin-conjugating enzyme]-L-cysteine + [acceptor protein]-L-lysine = [E2 ubiquitin-conjugating enzyme]-L-cysteine + N(6)-ubiquitinyl-[acceptor protein]-L-lysine.. Probable E3 ubiquitin-protein ligase involved in the regulation of root growth. Acts as a positive regulator of root gravitropism. This Arabidopsis thaliana (Mouse-ear cress) protein is Probable E3 ubiquitin-protein ligase WAVH2.